Here is a 2388-residue protein sequence, read N- to C-terminus: Spectrin beta chain, non-erythrocytic 2 (2388 aa).

The residue at position 2 (Ser2) is an N-acetylserine. The tract at residues 2 to 278 is actin-binding; the sequence is SSTLSPTDFD…IITYVATYYH (277 aa). Phosphoserine is present on residues Ser6 and Ser31. Calponin-homology (CH) domains are found at residues 57–161 and 176–281; these read AVQK…LRFQ and KSAK…HYFS. Spectrin repeat units lie at residues 306–414, 427–527, 532–639, 642–744, 749–849, and 856–954; these read LVEK…LALR, AARF…RERL, ELQK…RLEE, RLWR…QRLA, LYQF…RALE, and TMLS…KAAL. Ser959 carries the phosphoserine modification. 11 Spectrin repeats span residues 960–1063, 1066–1169, 1174–1266, 1279–1379, 1384–1485, 1489–1586, 1589–1692, 1696–1797, 1801–1904, 1910–2010, and 2017–2078; these read IQNY…SLGE, RLQD…GRLA, FQGF…NQEA, EQQH…ARSL, RAEL…RRLQ, EQHQ…RLEE, RAQQ…RLQE, LCQL…GQVL, YELQ…QLLL, FRFF…DWLQ, and VFGR…LTAL. At Ser1073 the chain carries Phosphoserine. Ser1574 bears the Phosphoserine mark. The span at 2080–2096 shows a compositional bias: basic and acidic residues; the sequence is ERENEQKRKREEEERRK. Disordered regions lie at residues 2080-2112 and 2124-2207; these read ERENEQKRKREEEERRKQPPTSEPMASQPEGSL and DGTQ…HVAT. Positions 2124-2163 are enriched in polar residues; that stretch reads DGTQSKLPPSTQAPSINGVCTDTESSQPLLEQQRLEQSNV. 2 positions are modified to phosphoserine: Ser2169 and Ser2199. A PH domain is found at 2218-2328; sequence QEQMEGTLCR…WLRVVNAAIA (111 aa). The disordered stretch occupies residues 2333–2388; that stretch reads ASGEPEEPVVPSASRGLTRAMTMPPVSQPEGSIVLRSKDGREREREKRFSFFKKNK. At Thr2354 the chain carries Phosphothreonine. Ser2359 bears the Phosphoserine mark. Residues 2368–2381 show a composition bias toward basic and acidic residues; that stretch reads RSKDGREREREKRF.

This sequence belongs to the spectrin family. Abundantly transcribed in the brain. Neurons are the predominant cell-type to express the gene. Found abundantly in Purkinje cells.

The protein localises to the cytoplasm. It is found in the cytoskeleton. It localises to the cell cortex. Functionally, probably plays an important role in neuronal membrane skeleton. The sequence is that of Spectrin beta chain, non-erythrocytic 2 (Sptbn2) from Rattus norvegicus (Rat).